A 104-amino-acid polypeptide reads, in one-letter code: Large ribosomal subunit protein uL24 (104 aa).

This sequence belongs to the universal ribosomal protein uL24 family. As to quaternary structure, part of the 50S ribosomal subunit.

Its function is as follows. One of two assembly initiator proteins, it binds directly to the 5'-end of the 23S rRNA, where it nucleates assembly of the 50S subunit. Functionally, one of the proteins that surrounds the polypeptide exit tunnel on the outside of the subunit. This Azotobacter vinelandii (strain DJ / ATCC BAA-1303) protein is Large ribosomal subunit protein uL24.